Reading from the N-terminus, the 165-residue chain is Zinc finger C2H2 protein ECU11_0990 (165 aa).

Basic and acidic residues-rich tracts occupy residues 1–10 (MEAESPKERV) and 19–32 (DPERGVKEREDTSS). Residues 1-38 (MEAESPKERVQGVSGESWDPERGVKEREDTSSKKGKGV) form a disordered region. 2 consecutive C2H2-type zinc fingers follow at residues 103 to 125 (FGCESCEEVFDSFKKLQLHKAQH) and 136 to 158 (LFCPVCKKTFDEKRKLMLHSRYH).

This is Zinc finger C2H2 protein ECU11_0990 from Encephalitozoon cuniculi (strain GB-M1) (Microsporidian parasite).